The primary structure comprises 819 residues: Solute carrier organic anion transporter family member 74D (819 aa).

Residues 1–157 (MTKSNGDVEA…GSSAESSSSC (157 aa)) form a disordered region. Over 1–174 (MTKSNGDVEA…RWARRFASTH (174 aa)) the chain is Cytoplasmic. 3 stretches are compositionally biased toward polar residues: residues 24-34 (GHGQLNGNGYH), 43-62 (SQAF…NGEV), and 71-81 (LYESTPSNNNE). Composition is skewed to low complexity over residues 91-111 (LKNG…NGHS) and 144-157 (DLNG…SSSC). A helical membrane pass occupies residues 175–195 (VFMVVFLLAYILQGMYMTYFV). Topologically, residues 196 to 213 (SVITTIEKLFQIKSKTTG) are extracellular. Residues 214 to 234 (ILLSASEMGQICTAMLLTYFA) traverse the membrane as a helical segment. The Cytoplasmic segment spans residues 235-242 (GRGHRPRW). The chain crosses the membrane as a helical span at residues 243–263 (IACGMVLFSIAAFSCALPHFI). Residues 264–332 (FGEQLMHSSV…LEQASHSKIT (69 aa)) are Extracellular-facing. Asn284, Asn293, and Asn309 each carry an N-linked (GlcNAc...) asparagine glycan. The chain crosses the membrane as a helical span at residues 333–353 (VIVLCIFFGSLLSSGIGQTAV). The Cytoplasmic portion of the chain corresponds to 354–373 (ATLGIPYIDDNVGSKQSPMY). The chain crosses the membrane as a helical span at residues 374–394 (MAVTIGMRILGPASGFIFGSF). The Extracellular portion of the chain corresponds to 395-413 (CTRWYVNFSNPGFDATDPR). Residue Asn401 is glycosylated (N-linked (GlcNAc...) asparagine). The chain crosses the membrane as a helical span at residues 414 to 434 (WIGAWWLGPVAIGSLMLLASI). Residues 435-488 (AMFSFPKQLRGKQKPPGQTATPAAPVEPEEKPKLKDFPKTVRRQLSNDILMFRT) are Cytoplasmic-facing. The interval 444 to 466 (RGKQKPPGQTATPAAPVEPEEKP) is disordered. The helical transmembrane segment at 489–509 (ASCVFHLLPIAGLYTFLPKYL) threads the bilayer. Residues 510-522 (ETQFRLATYDANM) lie on the Extracellular side of the membrane. A helical transmembrane segment spans residues 523–543 (IAAFCGILVMGIGIVISGLFI). Residues 544-553 (LKRKPTARGV) are Cytoplasmic-facing. Residues 554–574 (AAWIAFTALVYSAGMIILMFI) form a helical membrane-spanning segment. Residues 575–667 (GCSMNDFAGY…NGYCDNNCKN (93 aa)) are Extracellular-facing. Residues 593 to 651 (ALIEPTCSAALNCTCDKENFAPICADGKMYISACHAGCSSSSLRPSDNRTLYSDCACIP) form the Kazal-like domain. 3 cysteine pairs are disulfide-bonded: Cys599/Cys630, Cys607/Cys626, and Cys616/Cys649. Asn604 carries N-linked (GlcNAc...) asparagine glycosylation. A glycan (N-linked (GlcNAc...) asparagine) is linked at Asn640. Residues 668–688 (FIYFILIFAICVFMHSTSEVG) traverse the membrane as a helical segment. Residues 689 to 707 (SMLLVMRCTHPKDKAMAMG) lie on the Cytoplasmic side of the membrane. A helical membrane pass occupies residues 708–728 (VIQSAIGLFGNVPCPIIYGAV). Over 729–756 (VDSACLIWKSVCGKHGACSLYDADTFRQ) the chain is Extracellular. The chain crosses the membrane as a helical span at residues 757-777 (YFLGITAGIMFLAFLMDLVVW). The Cytoplasmic portion of the chain corresponds to 778–819 (RKAHRIDIAPEDPQEGGPASNGRTLEVSESKQPITPAPDTTV). The disordered stretch occupies residues 787–819 (PEDPQEGGPASNGRTLEVSESKQPITPAPDTTV). The span at 807 to 819 (SKQPITPAPDTTV) shows a compositional bias: polar residues.

Belongs to the organo anion transporter (TC 2.A.60) family.

The protein resides in the cell membrane. Its function is as follows. Transporter that mediates the cellular uptake of ecdysteroids, including ecdysone, from the hemolymph. The protein is Solute carrier organic anion transporter family member 74D of Drosophila melanogaster (Fruit fly).